A 181-amino-acid chain; its full sequence is Peptide deformylase (181 aa).

2 residues coordinate Fe cation: C99 and H141. Residue E142 is part of the active site. H145 contacts Fe cation.

Belongs to the polypeptide deformylase family. Fe(2+) is required as a cofactor.

It carries out the reaction N-terminal N-formyl-L-methionyl-[peptide] + H2O = N-terminal L-methionyl-[peptide] + formate. In terms of biological role, removes the formyl group from the N-terminal Met of newly synthesized proteins. Requires at least a dipeptide for an efficient rate of reaction. N-terminal L-methionine is a prerequisite for activity but the enzyme has broad specificity at other positions. This is Peptide deformylase from Chlamydia muridarum (strain MoPn / Nigg).